The chain runs to 346 residues: NADH-ubiquinone oxidoreductase chain 2 (346 aa).

The next 11 helical transmembrane spans lie at 1–21, 25–45, 60–80, 95–115, 124–144, 149–169, 178–195, 200–219, 242–262, 274–294, and 326–346; these read MNPH…TITI, HWVL…PLIS, FLTQ…NAWA, CLLL…HFWF, LMTA…LLLM, LNPA…GWMG, ILAF…IILV, LALL…FMAL, ATLM…GFMP, EMTP…FFYL, and AILA…HAIV.

This sequence belongs to the complex I subunit 2 family.

The protein localises to the mitochondrion inner membrane. The enzyme catalyses a ubiquinone + NADH + 5 H(+)(in) = a ubiquinol + NAD(+) + 4 H(+)(out). Functionally, core subunit of the mitochondrial membrane respiratory chain NADH dehydrogenase (Complex I) that is believed to belong to the minimal assembly required for catalysis. Complex I functions in the transfer of electrons from NADH to the respiratory chain. The immediate electron acceptor for the enzyme is believed to be ubiquinone. This chain is NADH-ubiquinone oxidoreductase chain 2 (MT-ND2), found in Sibirionetta formosa (Baikal teal).